The primary structure comprises 213 residues: Imidazole glycerol phosphate synthase subunit HisH (213 aa).

One can recognise a Glutamine amidotransferase type-1 domain in the interval 4 to 213 (SIAIVDYGMG…LYRNFVHWKP (210 aa)). Catalysis depends on Cys83, which acts as the Nucleophile. Residues His193 and Glu195 contribute to the active site.

Heterodimer of HisH and HisF.

It localises to the cytoplasm. It catalyses the reaction 5-[(5-phospho-1-deoxy-D-ribulos-1-ylimino)methylamino]-1-(5-phospho-beta-D-ribosyl)imidazole-4-carboxamide + L-glutamine = D-erythro-1-(imidazol-4-yl)glycerol 3-phosphate + 5-amino-1-(5-phospho-beta-D-ribosyl)imidazole-4-carboxamide + L-glutamate + H(+). The enzyme catalyses L-glutamine + H2O = L-glutamate + NH4(+). The protein operates within amino-acid biosynthesis; L-histidine biosynthesis; L-histidine from 5-phospho-alpha-D-ribose 1-diphosphate: step 5/9. Functionally, IGPS catalyzes the conversion of PRFAR and glutamine to IGP, AICAR and glutamate. The HisH subunit catalyzes the hydrolysis of glutamine to glutamate and ammonia as part of the synthesis of IGP and AICAR. The resulting ammonia molecule is channeled to the active site of HisF. The sequence is that of Imidazole glycerol phosphate synthase subunit HisH from Burkholderia lata (strain ATCC 17760 / DSM 23089 / LMG 22485 / NCIMB 9086 / R18194 / 383).